We begin with the raw amino-acid sequence, 224 residues long: Ribonuclease T (224 aa).

Residues 20–194 (VVIDVETAGF…YDTERTAELF (175 aa)) enclose the Exonuclease domain. Mg(2+) is bound by residues Asp23, Glu25, His181, and Asp186. His181 functions as the Proton donor/acceptor in the catalytic mechanism.

This sequence belongs to the RNase T family. As to quaternary structure, homodimer. The cofactor is Mg(2+).

In terms of biological role, trims short 3' overhangs of a variety of RNA species, leaving a one or two nucleotide 3' overhang. Responsible for the end-turnover of tRNA: specifically removes the terminal AMP residue from uncharged tRNA (tRNA-C-C-A). Also appears to be involved in tRNA biosynthesis. The polypeptide is Ribonuclease T (Enterobacter sp. (strain 638)).